The primary structure comprises 423 residues: Endochitinase 42 (423 aa).

Positions 1–22 (MLSFLGKSVALLAALQATLSSP) are cleaved as a signal peptide. The propeptide occupies 23–34 (KPGHRRASVEKR). Residues 38–401 (YANSVYFTNW…GTSHRALGGL (364 aa)) form the GH18 domain. Chitin-binding positions include 102 to 103 (GT) and 129 to 132 (GGWT). The Proton donor role is filled by glutamate 171. A chitin-binding site is contributed by tyrosine 172. N-linked (GlcNAc...) asparagine glycosylation occurs at asparagine 218. Chitin contacts are provided by residues 237–240 (MAYD) and tryptophan 378.

This sequence belongs to the glycosyl hydrolase 18 family. Chitinase class V subfamily.

It is found in the secreted. The catalysed reaction is Random endo-hydrolysis of N-acetyl-beta-D-glucosaminide (1-&gt;4)-beta-linkages in chitin and chitodextrins.. Its function is as follows. Secreted chitinase involved in the degradation of chitin, a component of the cell walls of fungi and exoskeletal elements of some animals (including worms and arthropods). Plays a morphogenetic role during apical growth, cell division and differentiation (cell wall morphogenesis). Also acts as an antifungal agent. Involved in the degradation and further assimilation of phytopathogenic fungi, namely mycoparasitism, the major mechanism accounting for the antagonistic activity against phytopathogenic fungi displayed by Trichoderma. This chain is Endochitinase 42 (chit42), found in Trichoderma harzianum (Hypocrea lixii).